A 302-amino-acid polypeptide reads, in one-letter code: Forkhead box protein R2 (302 aa).

The fork-head DNA-binding region spans 183–285 (RPPLNYSHLV…RVLAYARRES (103 aa)).

It is found in the nucleus. The protein is Forkhead box protein R2 (Foxr2) of Mus musculus (Mouse).